We begin with the raw amino-acid sequence, 948 residues long: MTKPTPPSSVADIRKSFLDFFASKGHTVVPSSPLVPGNDPTLMFTNSGMVQFKDVFLGTDKRPYVRATSVQACLRAGGKHNDLENVGYTARHHTFFEMLGNWSFGDYFKRDSLKWAWELLTEVYGLPKERLLATVYAEDDEAYDIWTKEIGLPPERVIRIGDNKGGRYKSDNFWMMADTGPCGPCSEIFYDHGPHIPGGPPGSPDEDGDRFIEIWNNVFMQFDMAEDGSVTPLPAPCVDTGMGLERLAAILQHVHSNYEIDLFAALIQAAARETGTADLANPSLKVIADHIRATAFLVSDGVIPSNEGRGYVQRRIVRRAIRHGYKLGRKTPFFHSLVKDLVAQMGDAYPKLREQEQRITEVLKAEEERFFETLANGMDLLDSALDIQLASKALQNKTLRWFASEGREEKLVSFKDDVQVAEAVLISDELRSTEYMQRLKETVPGLNEVKTLHSVIRDWSGLTLPGDLAFKLHDTYGFPLDLTNDVCRERGVTVDEDGFKAAMDRQKAQARAAGKFKMDKALEYGGEANRFSGYDGLTESAKIVAIYVDGTSAQALEAGQNGVVVLDNTPFYAESGGQVGDQGVIHAGGARFAVDDTLKIRADVYGHHGRLESGTLRVGDAVQAEVDAALRAATMRNHSVTHIMHKALREVLGSHVQQKGSLVNAERTRFDFAHNAPVTDAQIREIERRVNEEILANTPTGARVMDIESAQKTGAMMLFGEKYGETVRVLDIGTSRELCGGTHVARTGDIGLFKVVGESGVAAGVRRIEAVTGAGALAYLQQLEDTVAKAAGALRAPAAEITGRIGQALEQVKALEREVAALKGKLASSQGDELAGQAVDVKGLKVLAATLPGADAKTLRDTMDKLKDKLKSAAIVLAAVDGAKVQIAAGVTPDAMAKVKAGELVNFVASQVGGKGGGKPDMAMAGGTDAAALPAALASVAAWVGERA.

Residues H638, H642, C739, and H743 each coordinate Zn(2+).

The protein belongs to the class-II aminoacyl-tRNA synthetase family. It depends on Zn(2+) as a cofactor.

It is found in the cytoplasm. The catalysed reaction is tRNA(Ala) + L-alanine + ATP = L-alanyl-tRNA(Ala) + AMP + diphosphate. In terms of biological role, catalyzes the attachment of alanine to tRNA(Ala) in a two-step reaction: alanine is first activated by ATP to form Ala-AMP and then transferred to the acceptor end of tRNA(Ala). Also edits incorrectly charged Ser-tRNA(Ala) and Gly-tRNA(Ala) via its editing domain. This Paracidovorax citrulli (strain AAC00-1) (Acidovorax citrulli) protein is Alanine--tRNA ligase.